Reading from the N-terminus, the 142-residue chain is Large ribosomal subunit protein uL11 (142 aa).

This sequence belongs to the universal ribosomal protein uL11 family. As to quaternary structure, part of the ribosomal stalk of the 50S ribosomal subunit. Interacts with L10 and the large rRNA to form the base of the stalk. L10 forms an elongated spine to which L12 dimers bind in a sequential fashion forming a multimeric L10(L12)X complex. Post-translationally, one or more lysine residues are methylated.

Forms part of the ribosomal stalk which helps the ribosome interact with GTP-bound translation factors. In Akkermansia muciniphila (strain ATCC BAA-835 / DSM 22959 / JCM 33894 / BCRC 81048 / CCUG 64013 / CIP 107961 / Muc), this protein is Large ribosomal subunit protein uL11.